The chain runs to 571 residues: Isocitrate dehydrogenase kinase/phosphatase (571 aa).

ATP-binding positions include 318–324 and lysine 339; that span reads APGVRGM. Aspartate 374 is an active-site residue.

This sequence belongs to the AceK family.

Its subcellular location is the cytoplasm. The enzyme catalyses L-seryl-[isocitrate dehydrogenase] + ATP = O-phospho-L-seryl-[isocitrate dehydrogenase] + ADP + H(+). Its function is as follows. Bifunctional enzyme which can phosphorylate or dephosphorylate isocitrate dehydrogenase (IDH) on a specific serine residue. This is a regulatory mechanism which enables bacteria to bypass the Krebs cycle via the glyoxylate shunt in response to the source of carbon. When bacteria are grown on glucose, IDH is fully active and unphosphorylated, but when grown on acetate or ethanol, the activity of IDH declines drastically concomitant with its phosphorylation. This Pseudomonas entomophila (strain L48) protein is Isocitrate dehydrogenase kinase/phosphatase.